The chain runs to 277 residues: MLKQVIKTVSSSQAPKKYFFKQFCTSTTEKKGRVGLVTLNRPKSLNALSDGLISEINSAVKLFQEDKDVGSIIITGSEKAFAAGADIKEMEKVTLPDAYNNDLLAQWHDLTKIRKPIIAAVNGYALGGGCELAMMCDIIIAGEKAVFGQPEIKLGTIPGCGGTQRLIRAIGKSKAMELVLTGNNLTAVEAEKAGLVSKVVPVEELLTEATKMAEKIASYSQLTVAMAKEAVNASYELTLQEGIRFERRMFHSTFGTHDQKEGMNAFVEKRTPTWHNK.

A mitochondrion-targeting transit peptide spans 1 to 42; that stretch reads MLKQVIKTVSSSQAPKKYFFKQFCTSTTEKKGRVGLVTLNRP. Residues 85-88 and Gly128 each bind substrate; that span reads ADIK.

This sequence belongs to the enoyl-CoA hydratase/isomerase family. In terms of assembly, homohexamer; dimer of trimers.

The protein resides in the mitochondrion matrix. The enzyme catalyses a (3S)-3-hydroxyacyl-CoA = a (2E)-enoyl-CoA + H2O. It carries out the reaction a 4-saturated-(3S)-3-hydroxyacyl-CoA = a (3E)-enoyl-CoA + H2O. It catalyses the reaction (3S)-3-hydroxybutanoyl-CoA = (2E)-butenoyl-CoA + H2O. The catalysed reaction is 3-hydroxyisovaleryl-CoA = 3-methylbut-2-enoyl-CoA + H2O. The enzyme catalyses 3-hydroxypropanoyl-CoA = acryloyl-CoA + H2O. It carries out the reaction 3-hydroxybutanoyl-CoA = (2E)-butenoyl-CoA + H2O. Its pathway is lipid metabolism; fatty acid beta-oxidation. Functionally, straight-chain enoyl-CoA thioesters from C4 up to at least C16 are processed, although with decreasing catalytic rate. This is Probable enoyl-CoA hydratase, mitochondrial (echs1) from Dictyostelium discoideum (Social amoeba).